Here is a 671-residue protein sequence, read N- to C-terminus: Solute carrier family 53 member 1 (671 aa).

The tract at residues 1–193 is important for promoting lysosomal/autophagosomal degradation of PXo bodies following inorganic phosphate (Pi) starvation; that stretch reads MKFAEHLTAH…DIDRLIQETE (193 aa). Over 1-228 the chain is Cytoplasmic; sequence MKFAEHLTAH…EQQSPWTTFK (228 aa). The region spanning 2–218 is the SPX domain; sequence KFAEHLTAHI…MKRLRVPPLG (217 aa). The tract at residues 152 to 159 is important for inositol polyphosphate binding; the sequence is KILKKHDK. A helical membrane pass occupies residues 229–253; sequence VGLFSGAFVVLFITVVIAAMFYGFG. At 254-255 the chain is on the extracellular side; it reads EN. Residues 256–287 traverse the membrane as a helical segment; the sequence is WRAGMRMFRAPFLIIECLFLWGVNVYGWRSSG. Topologically, residues 288–300 are cytoplasmic; sequence VNHVLIFELDPRN. A helical transmembrane segment spans residues 301–328; it reads HLSEQNIMEVASVFGVIWACCVLSYIFC. Over 329-334 the chain is Extracellular; the sequence is DPLGIP. A helical membrane pass occupies residues 335-356; that stretch reads QYAAPLCLYTLMAAFLLNPTKT. An intramembrane region (helical) is located at residues 357–374; the sequence is FHHEARFWAIRILIRVIM. Over 375-379 the chain is Cytoplasmic; sequence APFCF. Residues 380–413 form a discontinuously helical membrane-spanning segment; it reads VNFADFWLADQLNSMVPAFLDIPFLICFFGRSPT. Residues aspartate 389 and asparagine 392 each contribute to the phosphate site. Topologically, residues 414 to 415 are extracellular; the sequence is WH. A discontinuously helical membrane pass occupies residues 416–455; the sequence is KAGKAASHCVEYVSLLHPIVAIMPAYFRFAQCIRRYRDTK. The region spanning 423–627 is the EXS domain; it reads HCVEYVSLLH…DCSDQTTILR (205 aa). Position 456 (glutamate 456) is a topological domain, cytoplasmic. A helical transmembrane segment spans residues 457-488; the sequence is SFPHLVNAAKYATSFFVVIFAHKYHTTTDTYP. 2 residues coordinate phosphate: lysine 466 and tyrosine 467. At 489 to 491 the chain is on the extracellular side; that stretch reads LSK. A helical transmembrane segment spans residues 492–519; that stretch reads ENPWFYCWITAAIFSSCYAYTWDIKMDW. The Cytoplasmic segment spans residues 520 to 538; the sequence is GLFDSKAGDNRFLREEIVY. The discontinuously helical transmembrane segment at 539-570 threads the bilayer; that stretch reads SSTWFYYFGIIEDLILRFSWTLSMSLIEAGYI. The phosphate site is built by arginine 555, arginine 586, and arginine 587. A helical transmembrane segment spans residues 571-609; the sequence is EGDVMMTILSPLEVFRRFIWNYFRLENEHLNNVGKFRAV. Over 610-671 the chain is Cytoplasmic; the sequence is RDISVAPMDC…QGESIEDLCS (62 aa).

This sequence belongs to the SYG1 (TC 2.A.94) family. As to quaternary structure, homodimer. Interacts with the FAR/SIN/STRIPAK complex members Cka and Pp2A-29B. Detected in PXo bodies found in the enterocytes and progenitors of the midgut and in the hindgut, but rarely occur in the Malpighian tubules, crop, brain, muscles and germlines (at protein level).

It is found in the membrane. It carries out the reaction phosphate(in) = phosphate(out). Functionally, inorganic ion transporter that mediates phosphate ion export across the cell membrane. Plays a major role in phosphate homeostasis, preventing intracellular phosphate accumulation and possible calcium phosphate precipitation, ultimately preserving calcium signaling. Binds inositol hexakisphosphate (Ins6P) and similar inositol polyphosphates, such as 5-diphospho-inositol pentakisphosphate (5-InsP7), which are important intracellular signaling molecules involved in regulation of phosphate flux. In enterocytes and differentiating progenitors of the gut, promotes the biogenesis and maintenance of organelles called PXo bodies that store intracellular inorganic phosphate (Pi), and also regulates Cka-JNK mediated tissue homeostasis in response to Pi availability in these tissues. Under conditions of adequate Pi, transports Pi into PXo bodies which convert and store the Pi in the form of phospholipids. It also inhibits Cka at the post-transcriptional level to prevent Cka-bsk/JNK mediated cell proliferation. Upon Pi starvation, Pxo expression is down-regulated resulting in the PXo bodies decreasing in phospholipid content until they undergo lysosomal/autophagosomal degradation and release the stored Pi back into the cytosol for use by the cell. Decrease in Pxo expression also activates the Cka protein, which moves to the nucleus to activate bsk/JNK which then induces nearby progenitor cells to proliferate and form new absorptive cells, probably helping the organism to cope with the nutrient deficiency by maximizing absorption of dietary Pi. The protein is Solute carrier family 53 member 1 of Drosophila melanogaster (Fruit fly).